A 273-amino-acid chain; its full sequence is Shikimate dehydrogenase (NADP(+)) (273 aa).

Shikimate contacts are provided by residues 19-21 and threonine 66; that span reads SKS. Lysine 70 (proton acceptor) is an active-site residue. Asparagine 91 and aspartate 107 together coordinate shikimate. Residues 131–135 and methionine 218 contribute to the NADP(+) site; that span reads GAGGA. Residue tyrosine 220 participates in shikimate binding. Position 242 (glycine 242) interacts with NADP(+).

It belongs to the shikimate dehydrogenase family. As to quaternary structure, homodimer.

It catalyses the reaction shikimate + NADP(+) = 3-dehydroshikimate + NADPH + H(+). The protein operates within metabolic intermediate biosynthesis; chorismate biosynthesis; chorismate from D-erythrose 4-phosphate and phosphoenolpyruvate: step 4/7. In terms of biological role, involved in the biosynthesis of the chorismate, which leads to the biosynthesis of aromatic amino acids. Catalyzes the reversible NADPH linked reduction of 3-dehydroshikimate (DHSA) to yield shikimate (SA). This is Shikimate dehydrogenase (NADP(+)) from Buchnera aphidicola subsp. Acyrthosiphon pisum (strain 5A).